The primary structure comprises 566 residues: Repressible alkaline phosphatase (566 aa).

Residues M1–T11 show a composition bias toward polar residues. The segment at M1–R27 is disordered. Residues M1–K33 lie on the Cytoplasmic side of the membrane. The helical transmembrane segment at I34–L59 threads the bilayer. D75 contributes to the Mg(2+) binding site. Residue D75 coordinates Zn(2+). Catalysis depends on S123, which acts as the Phosphoserine intermediate. S123 is subject to Phosphoserine. Residues D174 and T176 each coordinate Mg(2+). An N-linked (GlcNAc...) asparagine glycan is attached at N268. E325 contributes to the Mg(2+) binding site. Residues D330, H334, D373, and H374 each coordinate Zn(2+). The N-linked (GlcNAc...) asparagine glycan is linked to N401. Residue H484 coordinates Zn(2+).

The protein belongs to the alkaline phosphatase family. Mg(2+) is required as a cofactor. Zn(2+) serves as cofactor.

It localises to the vacuole membrane. It is found in the cytoplasm. It carries out the reaction a phosphate monoester + H2O = an alcohol + phosphate. It catalyses the reaction (2E,6E)-farnesyl diphosphate + H2O = (2E,6E)-farnesol + diphosphate. The enzyme catalyses beta-D-fructose 2,6-bisphosphate + H2O = beta-D-fructose 2-phosphate + phosphate. Phosphatase with broad substrate specificity. A truncated (soluble) version of the protein is responsible for the production of (E,E)-farnesol from (E,E)-farnesyl diphosphate. Acts as a fructose-2,6-bisphosphate 6-phosphatase. The sequence is that of Repressible alkaline phosphatase (PHO8) from Saccharomyces cerevisiae (strain ATCC 204508 / S288c) (Baker's yeast).